Here is a 185-residue protein sequence, read N- to C-terminus: Photosystem I assembly protein Ycf4 (185 aa).

The next 2 helical transmembrane spans lie at 24–44 (YIIG…SISS) and 66–86 (IIMG…WYLV).

The protein belongs to the Ycf4 family.

Its subcellular location is the cellular thylakoid membrane. In terms of biological role, seems to be required for the assembly of the photosystem I complex. This chain is Photosystem I assembly protein Ycf4, found in Prochlorococcus marinus (strain AS9601).